The following is a 200-amino-acid chain: Transcription factor FapR (200 aa).

Belongs to the FapR family.

Functionally, transcriptional factor involved in regulation of membrane lipid biosynthesis by repressing genes involved in fatty acid and phospholipid metabolism. This chain is Transcription factor FapR, found in Thermoanaerobacter pseudethanolicus (strain ATCC 33223 / 39E) (Clostridium thermohydrosulfuricum).